We begin with the raw amino-acid sequence, 337 residues long: Mycothiol acetyltransferase (337 aa).

N-acetyltransferase domains follow at residues 11–151 and 154–337; these read LDER…FELP and VRLR…MYRK. Glu37 contributes to the 1D-myo-inositol 2-(L-cysteinylamino)-2-deoxy-alpha-D-glucopyranoside binding site. 81–83 contacts acetyl-CoA; sequence LVI. Residue Glu182 participates in 1D-myo-inositol 2-(L-cysteinylamino)-2-deoxy-alpha-D-glucopyranoside binding. The tract at residues 210–246 is disordered; the sequence is RPTGSGDGDVADGGSTDGGPADSGSADGGAGEGGTGD. A compositionally biased stretch (low complexity) spans 221-234; the sequence is DGGSTDGGPADSGS. Gly residues predominate over residues 235 to 246; it reads ADGGAGEGGTGD. Lys257 and Glu271 together coordinate 1D-myo-inositol 2-(L-cysteinylamino)-2-deoxy-alpha-D-glucopyranoside. Residues 275–277 and 282–288 contribute to the acetyl-CoA site; these read VGV and QGGGLGR. Tyr309 lines the 1D-myo-inositol 2-(L-cysteinylamino)-2-deoxy-alpha-D-glucopyranoside pocket. An acetyl-CoA-binding site is contributed by 314 to 319; the sequence is NTAAIR.

Belongs to the acetyltransferase family. MshD subfamily. Monomer.

The catalysed reaction is 1D-myo-inositol 2-(L-cysteinylamino)-2-deoxy-alpha-D-glucopyranoside + acetyl-CoA = mycothiol + CoA + H(+). Catalyzes the transfer of acetyl from acetyl-CoA to desacetylmycothiol (Cys-GlcN-Ins) to form mycothiol. The chain is Mycothiol acetyltransferase from Streptosporangium roseum (strain ATCC 12428 / DSM 43021 / JCM 3005 / KCTC 9067 / NCIMB 10171 / NRRL 2505 / NI 9100).